The chain runs to 167 residues: uncharacterized protein (167 aa).

The disordered stretch occupies residues 140–167; sequence SSEEKKKKKKKKKEKSLHTEREKKKKKF. The segment covering 145-154 has biased composition (basic residues); that stretch reads KKKKKKKKEK.

This is an uncharacterized protein from Saccharomyces cerevisiae (strain ATCC 204508 / S288c) (Baker's yeast).